We begin with the raw amino-acid sequence, 70 residues long: Large ribosomal subunit protein eL38 (70 aa).

Belongs to the eukaryotic ribosomal protein eL38 family.

The sequence is that of Large ribosomal subunit protein eL38 (rpl-38) from Caenorhabditis elegans.